The chain runs to 563 residues: Inclusion membrane protein M (563 aa).

At 1 to 36 (MVYFRAHQPRHTPKTFPLEVHHSFSDKHPQIAKAMR) the chain is on the cytoplasmic side. The chain crosses the membrane as a helical span at residues 37–57 (ITGIALAALSLLAVVACVIAV). Ser-58 is a topological domain (vacuolar). The chain crosses the membrane as a helical span at residues 59-79 (AGGAAIPLAVISGIAVMSGLL). Over 80–252 (SAATIICSAK…VLKVALSLGV (173 aa)) the chain is Cytoplasmic. The chain crosses the membrane as a helical span at residues 253 to 273 (LAGVAALIIFLPPSLPFIAVI). A topological domain (vacuolar) is located at residue Gly-274. The helical transmembrane segment at 275–295 (VSSLALGMASFLMIRGIKYLL) threads the bilayer. Topologically, residues 296–563 (EHSPLNRKQL…QLAQYLLDNH (268 aa)) are cytoplasmic.

Belongs to the chlamydial CPn_0065/CT_288/TC_0561 family. In terms of assembly, interacts with host CCDC146. In host cells infected with C.trachomatis incM, CCDC146 is recruited to the periphery of the pathogen-containing vacuole but recruitment is not dependent on incM.

The protein localises to the host vacuole. The protein resides in the host pathogen-containing vacuole. It localises to the host pathogen-containing vacuole membrane. Its subcellular location is the host pathogen-containing vacuole lumen. It is found in the secreted. Functionally, interferes with host cell cytokinesis, centrosome positioning and Golgi distribution, and contributes to the morphology and stability of the pathogen-containing vacuole. May exert its effects by acting directly or indirectly on host microtubules. This is Inclusion membrane protein M from Chlamydia trachomatis serovar D (strain ATCC VR-885 / DSM 19411 / UW-3/Cx).